Reading from the N-terminus, the 468-residue chain is MRDFMDYIQLAFYDASKWNRDNSYSQLTTTANALLDFSTPERLKVNLSSLSTPHFATTYTLGTVGLIDGSISYLFTTIPLHDTPSRSTLIPLRKLVPGYRQIYPPSLPPAFPAADGRDGDLAIGGTEGDLKKKATLLHATLHLPPPTTLTGSFLRRLSPTTQLSLAFCSSRAPASKSAPQATLVTQILYDTGKYNSEFLFSTDNALFGFKGLWNFGPDPRKQNQNGGDPAREPCRSLLSLLSAGGEVYYSPVSSVVGLSTGLRFTTLPAATENPHSTFPYTLTLTLTPLTGSMSTTYSLLASPNLAFSSRFGFNVYSWESEMVAGCELWRRSKKLHTLQRNSSPLFAVDDLTWARRKMGLQDAAVSVHPERDGLPGIQRDDHDMHHHPQRPHASDSVIKVRVDQSWNIRALWEGRVKELVVSAGIALGPKSRSSLSYASSLAASGPGAAGGLSSYGWKSVGVSVLYSS.

The segment covering 370-386 (ERDGLPGIQRDDHDMHH) has biased composition (basic and acidic residues). The segment at 370–394 (ERDGLPGIQRDDHDMHHHPQRPHAS) is disordered.

It belongs to the MDM10 family. Component of the ER-mitochondria encounter structure (ERMES) or MDM complex, composed of MMM1, MDM10, MDM12 and MDM34. Associates with the mitochondrial outer membrane sorting assembly machinery SAM(core) complex.

Its subcellular location is the mitochondrion outer membrane. Functionally, component of the ERMES/MDM complex, which serves as a molecular tether to connect the endoplasmic reticulum and mitochondria. Components of this complex are involved in the control of mitochondrial shape and protein biogenesis and may function in phospholipid exchange. MDM10 is involved in the late assembly steps of the general translocase of the mitochondrial outer membrane (TOM complex). Functions in the TOM40-specific route of the assembly of outer membrane beta-barrel proteins, including the association of TOM40 with the receptor TOM22 and small TOM proteins. Can associate with the SAM(core) complex as well as the MDM12-MMM1 complex, both involved in late steps of the major beta-barrel assembly pathway, that is responsible for biogenesis of all outer membrane beta-barrel proteins. May act as a switch that shuttles between both complexes and channels precursor proteins into the TOM40-specific pathway. Plays a role in mitochondrial morphology and in the inheritance of mitochondria. The polypeptide is Mitochondrial distribution and morphology protein 10 (Ajellomyces dermatitidis (strain ER-3 / ATCC MYA-2586) (Blastomyces dermatitidis)).